The sequence spans 253 residues: uncharacterized protein (253 aa).

The interval 211–235 (DEPEPAQPTLTVPSAQPVSNRRGKP) is disordered. The span at 218–229 (PTLTVPSAQPVS) shows a compositional bias: polar residues.

This is an uncharacterized protein from Mycobacterium tuberculosis (strain CDC 1551 / Oshkosh).